We begin with the raw amino-acid sequence, 286 residues long: Nucleotide-binding protein VC_2532 (286 aa).

ATP is bound at residue 8-15 (GQSGAGKS). 56–59 (DIRN) provides a ligand contact to GTP.

This sequence belongs to the RapZ-like family.

Its function is as follows. Displays ATPase and GTPase activities. The polypeptide is Nucleotide-binding protein VC_2532 (Vibrio cholerae serotype O1 (strain ATCC 39315 / El Tor Inaba N16961)).